A 410-amino-acid chain; its full sequence is Voltage-dependent chloride channel 1, chloroplastic (410 aa).

Topologically, residues 1–110 (MYQSMNLSVS…RHLLSSFSSR (110 aa)) are lumenal, thylakoid. A helical transmembrane segment spans residues 111-131 (VILSLIPPVFFFTSVAVVIAS). Residues 132 to 147 (YNSAVALDWLPGIFPI) lie on the Stromal side of the membrane. The chain crosses the membrane as a helical span at residues 148-168 (LRSSSLPYQLTAPALALLLVF). Topologically, residues 169–315 (RTEASYSRYE…PLSYTRLTSR (147 aa)) are lumenal, thylakoid. The next 2 helical transmembrane spans lie at 316–336 (FLVFWHLTLPIILWDECHWIV) and 337–357 (VPATFISAASLFCIEEVGVLI). Topologically, residues 358–410 (EEPFPMLALDELCDLVHSNIQEAVKSEKVIRNRIIAKIKLHEFKHSSNGRHRS) are lumenal, thylakoid.

This sequence belongs to the anion channel-forming bestrophin (TC 1.A.46) family. Voltage-dependent chloride channel subfamily. Mostly expressed in flowers and leaves and, to a lower extent, in stems and roots.

Its subcellular location is the plastid. It localises to the chloroplast thylakoid membrane. The enzyme catalyses chloride(in) = chloride(out). More active at positive than at negative voltages. Repressed by the general anion channel inhibitors dithiocyanatostilbene-2,20-disulphonic acid (DIDS) and niflumic acid. In terms of biological role, voltage-dependent chloride (Cl) channel critical for proton motive force (PMF) partitioning across the thylakoid membrane by anion influx into the lumen during illumination, thus being required for photoprotection under fluctuating light conditions. Influences thylakoid ultrastructure, including lumen size and organization. During photosynthetic response on transition from dark to low light, involved in a sequential mechanism of adaptation; VCCN1 and CLCe first trigger the activation of photoprotection, which is later down-regulated by KEA3 to a low steady state, while adjusting electron transport. On transition from low to high light, accelerates the activation of photoprotection by building up a pH gradient across the thylakoid membrane. The chain is Voltage-dependent chloride channel 1, chloroplastic from Arabidopsis thaliana (Mouse-ear cress).